The chain runs to 71 residues: Delta-actitoxin-Avd2b 4 (71 aa).

Positions 1–20 (MMNRLLVFLMLGAFMLVVSA) are cleaved as a signal peptide. The propeptide occupies 21 to 41 (NDAYGDEPAFKDLNQGDESLG). Disulfide bonds link C46-C61, C47-C55, and C49-C66.

Belongs to the sea anemone short toxin (type III) family.

It is found in the secreted. It localises to the nematocyst. In terms of biological role, voltage-gated sodium channel (Nav) inhibitor. 1 uM completely inhibits insect voltage-gated sodium channel inactivation (DmNav1 from D.melanogaster). In Anemonia viridis (Snakelocks anemone), this protein is Delta-actitoxin-Avd2b 4.